Here is a 392-residue protein sequence, read N- to C-terminus: Chorismate synthase (392 aa).

NADP(+)-binding residues include arginine 39 and arginine 45. Residues 128–130 (RSS), 248–249 (QA), glycine 300, 315–319 (KPIPT), and arginine 341 contribute to the FMN site.

The protein belongs to the chorismate synthase family. In terms of assembly, homotetramer. It depends on FMNH2 as a cofactor.

It catalyses the reaction 5-O-(1-carboxyvinyl)-3-phosphoshikimate = chorismate + phosphate. The protein operates within metabolic intermediate biosynthesis; chorismate biosynthesis; chorismate from D-erythrose 4-phosphate and phosphoenolpyruvate: step 7/7. Its function is as follows. Catalyzes the anti-1,4-elimination of the C-3 phosphate and the C-6 proR hydrogen from 5-enolpyruvylshikimate-3-phosphate (EPSP) to yield chorismate, which is the branch point compound that serves as the starting substrate for the three terminal pathways of aromatic amino acid biosynthesis. This reaction introduces a second double bond into the aromatic ring system. This chain is Chorismate synthase, found in Trichlorobacter lovleyi (strain ATCC BAA-1151 / DSM 17278 / SZ) (Geobacter lovleyi).